The sequence spans 250 residues: DNA repair protein RecO (250 aa).

Belongs to the RecO family.

Involved in DNA repair and RecF pathway recombination. In Granulibacter bethesdensis (strain ATCC BAA-1260 / CGDNIH1), this protein is DNA repair protein RecO.